Reading from the N-terminus, the 610-residue chain is MDIKGQFWNDDDSEGDNESEEFLYGVQGSCAADLYRHPQLDADIEAVKEIYSENSVSIREYGTIDDVDIDLHINISFLDEEVSTAWKVLRTEPIVLRLRFSLSQYLDGPEPSIEVFQPSNKEGFGLGLQLKKILGMFTSQQWKHLSNDFLKTQQEKRHSWLKASGTIKKFRAGLSIFSPIPKSPSFPIIQDSMLKGKLGVPELRVGRLMNRSVSCTMKNPKVEVFGYPPSPQVSGHCKNIPTLEYGFLVQIMKYAEQRIPTLNEYCVVCDEQHVFQNGSMLKPAVCTRELCVFSFYTLGVMSGAAEEVATGAEVVDLLVAMCRAALESPRKSIIFEPYPSVVDPTDPKTLAFNPKKKNYERLQKALDSVMSIREMTQGSYLEIKKQMDKLDPLAHPLLQWIISSNRSHIVKLPLSRLKFMHTSHQFLLLSSPPAKEARFRTAKKLYGSTFAFHGSHIENWHSILRNGLVNASYTKLQLHGAAYGKGIYLSPISSISFGYSGMGKGQHRMPSKDELVQRYNRMNTIPQTRSIQSRFLQSRNLNCIALCEVITSKDLQKHGNIWVCPVSDHVCTRFFFVYEDGQVGDANINTQDPKIQKEIMRVIGTQVYTN.

The 227-residue stretch at 374–600 folds into the PARP catalytic domain; sequence EMTQGSYLEI…QDPKIQKEIM (227 aa). Asp-580 is modified (ADP-ribosyl aspartic acid).

The protein belongs to the ARTD/PARP family. Auto-mono-ADP-ribosylated.

The catalysed reaction is L-aspartyl-[protein] + NAD(+) = 4-O-(ADP-D-ribosyl)-L-aspartyl-[protein] + nicotinamide. The enzyme catalyses L-cysteinyl-[protein] + NAD(+) = S-(ADP-D-ribosyl)-L-cysteinyl-[protein] + nicotinamide + H(+). Functionally, mono-ADP-ribosyltransferase that mediates mono-ADP-ribosylation of target proteins. The sequence is that of Protein mono-ADP-ribosyltransferase PARP6 from Pongo abelii (Sumatran orangutan).